The chain runs to 70 residues: NAD(P)H-quinone oxidoreductase subunit O (70 aa).

This sequence belongs to the complex I NdhO subunit family. In terms of assembly, NDH-1 can be composed of about 15 different subunits; different subcomplexes with different compositions have been identified which probably have different functions.

The protein resides in the cellular thylakoid membrane. It carries out the reaction a plastoquinone + NADH + (n+1) H(+)(in) = a plastoquinol + NAD(+) + n H(+)(out). The catalysed reaction is a plastoquinone + NADPH + (n+1) H(+)(in) = a plastoquinol + NADP(+) + n H(+)(out). NDH-1 shuttles electrons from an unknown electron donor, via FMN and iron-sulfur (Fe-S) centers, to quinones in the respiratory and/or the photosynthetic chain. The immediate electron acceptor for the enzyme in this species is believed to be plastoquinone. Couples the redox reaction to proton translocation, and thus conserves the redox energy in a proton gradient. Cyanobacterial NDH-1 also plays a role in inorganic carbon-concentration. The sequence is that of NAD(P)H-quinone oxidoreductase subunit O from Nostoc sp. (strain PCC 7120 / SAG 25.82 / UTEX 2576).